Consider the following 199-residue polypeptide: Probable thymidylate kinase (199 aa).

9–16 (GIDGCGKT) contributes to the ATP binding site.

It belongs to the thymidylate kinase family.

It carries out the reaction dTMP + ATP = dTDP + ADP. The protein is Probable thymidylate kinase of Methanococcus maripaludis (strain C7 / ATCC BAA-1331).